Consider the following 1602-residue polypeptide: Calmodulin-regulated spectrin-associated protein 1 (1602 aa).

One can recognise a Calponin-homology (CH) domain in the interval glutamate 216–glutamate 331. A phosphoserine mark is found at serine 217, serine 371, serine 375, serine 416, and serine 431. Residues glutamine 426 to glutamine 471 form a disordered region. Threonine 512 is modified (phosphothreonine). Residues serine 563, serine 575, and serine 589 each carry the phosphoserine modification. Positions alanine 603–proline 620 are enriched in basic and acidic residues. Residues alanine 603–arginine 637 are disordered. Serine 629, serine 722, serine 728, serine 738, and serine 740 each carry phosphoserine. Over residues lysine 772–serine 789 the composition is skewed to basic and acidic residues. Disordered regions lie at residues lysine 772 to alanine 808 and leucine 825 to proline 870. Low complexity-rich tracts occupy residues serine 797–alanine 808 and threonine 830–threonine 841. Basic and acidic residues predominate over residues glutamine 857 to aspartate 869. Positions alanine 871–isoleucine 892 are sufficient for interaction with SPTBN1. Coiled coils occupy residues leucine 873 to lysine 909 and aspartate 1016 to leucine 1048. The segment at serine 903–glycine 922 is sufficient for interaction with calmodulin. Disordered regions lie at residues phenylalanine 1075 to leucine 1165, lysine 1206 to proline 1226, and alanine 1301 to threonine 1448. Position 1080 is a phosphoserine (serine 1080). Over residues arginine 1103–proline 1114 the composition is skewed to basic and acidic residues. Over residues glutamine 1115–valine 1127 the composition is skewed to polar residues. The segment covering lysine 1206–serine 1220 has biased composition (low complexity). A coiled-coil region spans residues leucine 1291–glutamate 1343. Residues alanine 1301 to arginine 1346 show a composition bias toward basic and acidic residues. Residues proline 1361–serine 1372 show a composition bias toward basic residues. A compositionally biased stretch (polar residues) spans serine 1380–asparagine 1392. Positions leucine 1393 to threonine 1410 are enriched in low complexity. Residues serine 1398 and serine 1427 each carry the phosphoserine modification. A CKK domain is found at glycine 1463–lysine 1597. Position 1537 is a phosphotyrosine (tyrosine 1537).

The protein belongs to the CAMSAP1 family. Interacts with spectrin via SPTBN1; the interaction is direct. Interacts with calmodulin; calcium-dependent it prevents interaction with spectrin.

The protein localises to the cytoplasm. The protein resides in the cytoskeleton. Key microtubule-organizing protein that specifically binds the minus-end of non-centrosomal microtubules and regulates their dynamics and organization. Specifically recognizes growing microtubule minus-ends and stabilizes microtubules. Acts on free microtubule minus-ends that are not capped by microtubule-nucleating proteins or other factors and protects microtubule minus-ends from depolymerization. In contrast to CAMSAP2 and CAMSAP3, tracks along the growing tips of minus-end microtubules without significantly affecting the polymerization rate: binds at the very tip of the microtubules minus-end and acts as a minus-end tracking protein (-TIP) that dissociates from microtubules after allowing tubulin incorporation. Through interaction with spectrin may regulate neurite outgrowth. This chain is Calmodulin-regulated spectrin-associated protein 1 (CAMSAP1), found in Homo sapiens (Human).